A 717-amino-acid polypeptide reads, in one-letter code: Polyribonucleotide nucleotidyltransferase (717 aa).

Residues Asp-495 and Asp-501 each contribute to the Mg(2+) site. The KH domain occupies 562–624 (PRMIMIQIPK…TALDSALSQI (63 aa)). The 70-residue stretch at 634-703 (GEVYEGKVKS…KTGKYRLSRK (70 aa)) folds into the S1 motif domain.

The protein belongs to the polyribonucleotide nucleotidyltransferase family. It depends on Mg(2+) as a cofactor.

Its subcellular location is the cytoplasm. It catalyses the reaction RNA(n+1) + phosphate = RNA(n) + a ribonucleoside 5'-diphosphate. Functionally, involved in mRNA degradation. Catalyzes the phosphorolysis of single-stranded polyribonucleotides processively in the 3'- to 5'-direction. This chain is Polyribonucleotide nucleotidyltransferase, found in Cytophaga hutchinsonii (strain ATCC 33406 / DSM 1761 / CIP 103989 / NBRC 15051 / NCIMB 9469 / D465).